Consider the following 190-residue polypeptide: Threonylcarbamoyl-AMP synthase (190 aa).

The YrdC-like domain maps to 7–190; it reads GDAIAAAIDV…ALTGELFRQG (184 aa).

It belongs to the SUA5 family. TsaC subfamily.

The protein resides in the cytoplasm. The catalysed reaction is L-threonine + hydrogencarbonate + ATP = L-threonylcarbamoyladenylate + diphosphate + H2O. Its function is as follows. Required for the formation of a threonylcarbamoyl group on adenosine at position 37 (t(6)A37) in tRNAs that read codons beginning with adenine. Catalyzes the conversion of L-threonine, HCO(3)(-)/CO(2) and ATP to give threonylcarbamoyl-AMP (TC-AMP) as the acyladenylate intermediate, with the release of diphosphate. In Shigella boydii serotype 4 (strain Sb227), this protein is Threonylcarbamoyl-AMP synthase.